We begin with the raw amino-acid sequence, 127 residues long: Fluoride-specific ion channel FluC (127 aa).

4 consecutive transmembrane segments (helical) span residues 4–24 (LLLA…LLSM), 35–55 (LGTL…FAWF), 71–91 (TGFC…VFLL), and 103–123 (VFVN…LFSA). Residues G75 and T78 each coordinate Na(+).

It belongs to the fluoride channel Fluc/FEX (TC 1.A.43) family.

It is found in the cell inner membrane. It catalyses the reaction fluoride(in) = fluoride(out). Its activity is regulated as follows. Na(+) is not transported, but it plays an essential structural role and its presence is essential for fluoride channel function. Functionally, fluoride-specific ion channel. Important for reducing fluoride concentration in the cell, thus reducing its toxicity. This chain is Fluoride-specific ion channel FluC, found in Escherichia coli O8 (strain IAI1).